The following is a 400-amino-acid chain: Acetate kinase (400 aa).

N10 serves as a coordination point for Mg(2+). K17 contacts ATP. Position 91 (R91) interacts with substrate. D150 acts as the Proton donor/acceptor in catalysis. ATP-binding positions include 210-214 (HLGSG), 285-287 (DCR), and 333-337 (GIGEN). E387 is a Mg(2+) binding site.

It belongs to the acetokinase family. In terms of assembly, homodimer. Mg(2+) is required as a cofactor. Mn(2+) serves as cofactor.

It is found in the cytoplasm. The enzyme catalyses acetate + ATP = acetyl phosphate + ADP. It functions in the pathway metabolic intermediate biosynthesis; acetyl-CoA biosynthesis; acetyl-CoA from acetate: step 1/2. Its function is as follows. Catalyzes the formation of acetyl phosphate from acetate and ATP. Can also catalyze the reverse reaction. This Baumannia cicadellinicola subsp. Homalodisca coagulata protein is Acetate kinase.